The following is a 210-amino-acid chain: Adenylate kinase (210 aa).

10-15 (GSGKGT) provides a ligand contact to ATP. Positions 28-57 (SVGKVLRTVMESNTAEADVVKKFIKSGKLV) are NMP. AMP-binding positions include R34, 55-57 (KLV), 83-86 (GYPR), and Q90. The tract at residues 120–158 (GRISCTDCGTIYNKLYCMPKINGVCDICNSSSFQNRVDD) is LID. R121 serves as a coordination point for ATP. 2 residues coordinate Zn(2+): C124 and C127. Residue 130 to 131 (IY) coordinates ATP. Zn(2+)-binding residues include C144 and C147. 2 residues coordinate AMP: R155 and R166. Q194 provides a ligand contact to ATP.

Belongs to the adenylate kinase family. Monomer.

Its subcellular location is the cytoplasm. It carries out the reaction AMP + ATP = 2 ADP. It functions in the pathway purine metabolism; AMP biosynthesis via salvage pathway; AMP from ADP: step 1/1. In terms of biological role, catalyzes the reversible transfer of the terminal phosphate group between ATP and AMP. Plays an important role in cellular energy homeostasis and in adenine nucleotide metabolism. The sequence is that of Adenylate kinase from Orientia tsutsugamushi (strain Boryong) (Rickettsia tsutsugamushi).